Reading from the N-terminus, the 107-residue chain is MKDLNSLMKQAQAMQQKLADAQGRIAEMEVEGTSGGGMVKLVLKGTGELARVDLDESLMAPGEGEVVADLIVAAHADAKRKLDEKQAEVMREAAGPFAGMPGMPKLF.

This sequence belongs to the YbaB/EbfC family. As to quaternary structure, homodimer.

The protein resides in the cytoplasm. It is found in the nucleoid. Functionally, binds to DNA and alters its conformation. May be involved in regulation of gene expression, nucleoid organization and DNA protection. The protein is Nucleoid-associated protein PHZ_c0369 of Phenylobacterium zucineum (strain HLK1).